The following is a 1088-amino-acid chain: Adenylate-forming reductase Nps10 (1088 aa).

The segment at 1 to 22 is disordered; that stretch reads MSSVSIQIPLPTPPPTQAHNSQ. The tract at residues 38 to 451 is adenylation (A) domain; it reads FDWHSKNSPN…KIFGRTDDQI (414 aa). AMP is bound by residues His-261, 357 to 358, Thr-362, and 443 to 446; these read NL and IFGR. A Carrier domain is found at 586 to 668; that stretch reads AWDSAKTLGF…SLASFVSSVA (83 aa). Ser-621 bears the O-(pantetheine 4'-phosphoryl)serine mark. Positions 712–951 are reductase (R) domain; the sequence is LTGSTGALGS…IPVNVAAAAI (240 aa). NADP(+)-binding positions include 716–719, 804–806, Tyr-875, and Lys-879; these read TGAL and NAW.

The protein belongs to the adenylate-forming reductase family.

In terms of biological role, adenylate-forming reductase, a natural product biosynthesis enzyme that resembles non-ribosomal peptide synthetases, yet serves to modify one substrate, rather than to condense two or more building blocks. The A-domain preferentially accepts phenylpyruvic acid and benzoic acid as substrate. The natural product of the enzyme is not yet known. This chain is Adenylate-forming reductase Nps10, found in Heterobasidion annosum (Root rot fungus).